The sequence spans 629 residues: MFYQENFDVIVVGGGHAGTEAALAAARMGQKTLLLTHNIDTLGQMSCNPAIGGIGKGHLVKEVDALGGLMAKATDKGGIQFRTLNSSKGPAVRATRAQADRALYKAAVREVLENQPNLMLFQQAVDDLIVENDRVIGVVTEMGLKFRATSVVLTVGTFLGGKIHIGLENYSGGRAGDPPSIALASRLRELPFRVDRLKTGTPPRIDARTVDFSRLQAQHGDNPIPTFSFMGKTSDHPRQIPCYITYTNEKTHDVIRNNLDRSPMYSGVIEGIGPRYCPSIEDKVMRFADKNSHQIFIEPEGLTTHELYPNGISTSLPFDVQIQIVRSMDGFENAAIMRPGYAIEYDFFDPRDLKQTFETKFIDGLFFAGQINGTTGYEEAAAQGLLAGMNAALQSQGKEGWCPRRDQAYMGVLIDDLSTMGTKEPYRMFTSRAEYRLLLREDNADLRLTEIGREFGLVDDDRWARFNQKVENIEQERQRLKDIWINPNSDHVDEINKILKTPIAREANGEDLLRRPEITYKLLTQLEDFSPAHIDTQASEQVEIQVKYQGYIDRQKDEVEKSLRHETTKLPFDLEYSIVKGLSNEVIAKLTDAKPETIGMASRISGITPAAISLLLVYLKKHGMLKKGE.

FAD-binding positions include 13 to 18 (GGGHAG), V125, and S180. 273 to 287 (GPRYCPSIEDKVMRF) contacts NAD(+). Residue Q370 participates in FAD binding.

Belongs to the MnmG family. In terms of assembly, homodimer. Heterotetramer of two MnmE and two MnmG subunits. FAD serves as cofactor.

It is found in the cytoplasm. Its function is as follows. NAD-binding protein involved in the addition of a carboxymethylaminomethyl (cmnm) group at the wobble position (U34) of certain tRNAs, forming tRNA-cmnm(5)s(2)U34. The protein is tRNA uridine 5-carboxymethylaminomethyl modification enzyme MnmG of Photobacterium profundum (strain SS9).